A 237-amino-acid chain; its full sequence is LexA repressor (237 aa).

The H-T-H motif DNA-binding region spans 26–46; the sequence is FDEMKDALDLRSKSGIHRLIT. Residues S158 and K196 each act as for autocatalytic cleavage activity in the active site.

The protein belongs to the peptidase S24 family. In terms of assembly, homodimer.

It catalyses the reaction Hydrolysis of Ala-|-Gly bond in repressor LexA.. Functionally, represses a number of genes involved in the response to DNA damage (SOS response), including recA and lexA. In the presence of single-stranded DNA, RecA interacts with LexA causing an autocatalytic cleavage which disrupts the DNA-binding part of LexA, leading to derepression of the SOS regulon and eventually DNA repair. The protein is LexA repressor of Rhodopseudomonas palustris (strain BisB18).